We begin with the raw amino-acid sequence, 491 residues long: 3-octaprenyl-4-hydroxybenzoate carboxy-lyase (491 aa).

Position 172 (Asn-172) interacts with Mn(2+). Prenylated FMN-binding positions include 175 to 177 (IYR), 189 to 191 (RWL), and 194 to 195 (RG). Residue Glu-238 coordinates Mn(2+). Catalysis depends on Asp-287, which acts as the Proton donor.

Belongs to the UbiD family. In terms of assembly, homohexamer. Prenylated FMN is required as a cofactor. Mn(2+) serves as cofactor.

It is found in the cell membrane. The catalysed reaction is a 4-hydroxy-3-(all-trans-polyprenyl)benzoate + H(+) = a 2-(all-trans-polyprenyl)phenol + CO2. Its pathway is cofactor biosynthesis; ubiquinone biosynthesis. Catalyzes the decarboxylation of 3-octaprenyl-4-hydroxy benzoate to 2-octaprenylphenol, an intermediate step in ubiquinone biosynthesis. The polypeptide is 3-octaprenyl-4-hydroxybenzoate carboxy-lyase (Klebsiella pneumoniae subsp. pneumoniae (strain ATCC 700721 / MGH 78578)).